The following is a 658-amino-acid chain: Gametogenetin (658 aa).

Disordered stretches follow at residues Met-1–Gly-268 and Lys-285–Gly-584. Residues Ser-14 to Pro-30 show a composition bias toward basic and acidic residues. Residues Pro-54–Ser-83 show a composition bias toward low complexity. An interaction with GGNBP1 region spans residues Arg-127 to Pro-491. Residues Pro-163–Pro-188 show a composition bias toward pro residues. A compositionally biased stretch (polar residues) spans Leu-194 to Ser-204. Positions Ser-252 to Gly-264 are enriched in low complexity. Ser-384 carries the post-translational modification Phosphoserine. Residues Pro-398–Pro-409 are compositionally biased toward low complexity. A compositionally biased stretch (pro residues) spans Arg-423–Pro-460. Residues Leu-489 to Ala-516 are compositionally biased toward low complexity. Residues Glu-496 to Thr-658 form an interactions with ZNF403/GGNBP2 and OAZ3 region. Residues Ile-527–Arg-536 show a composition bias toward basic residues.

Interacts with FANCL, GGNBP1 and ZNF403/GGNBP2.

In terms of biological role, may be involved in spermatogenesis. In Rattus norvegicus (Rat), this protein is Gametogenetin (Ggn).